We begin with the raw amino-acid sequence, 326 residues long: Peroxidase 1 (326 aa).

A signal peptide spans Met1–Ala22. Gln23 bears the Pyrrolidone carboxylic acid mark. 4 disulfides stabilise this stretch: Cys33–Cys112, Cys66–Cys71, Cys118–Cys322, and Cys196–Cys231. The Proton acceptor role is filled by His64. Ca(2+)-binding residues include Asp65, Val68, Gly70, Asp72, and Ser74. Residues Asn82 and Asn153 are each glycosylated (N-linked (GlcNAc...) asparagine). Residue Pro159 coordinates substrate. Asn164 is a glycosylation site (N-linked (GlcNAc...) asparagine). Residue His189 participates in heme b binding. Position 190 (Thr190) interacts with Ca(2+). Residues Asn205 and Asn237 are each glycosylated (N-linked (GlcNAc...) asparagine). 3 residues coordinate Ca(2+): Asp244, Ser247, and Asp252.

This sequence belongs to the peroxidase family. Classical plant (class III) peroxidase subfamily. Requires Ca(2+) as cofactor. Heme b serves as cofactor.

It localises to the secreted. The enzyme catalyses 2 a phenolic donor + H2O2 = 2 a phenolic radical donor + 2 H2O. In terms of biological role, removal of H(2)O(2), oxidation of toxic reductants, biosynthesis and degradation of lignin, suberization, auxin catabolism, response to environmental stresses such as wounding, pathogen attack and oxidative stress. These functions might be dependent on each isozyme/isoform in each plant tissue. This Oryza sativa subsp. japonica (Rice) protein is Peroxidase 1 (PRX74).